The following is a 244-amino-acid chain: Uridylate kinase (244 aa).

18 to 21 (KISG) provides a ligand contact to ATP. An involved in allosteric activation by GTP region spans residues 26–31 (GDQGYG). A UMP-binding site is contributed by Gly60. ATP contacts are provided by Gly61 and Arg65. UMP contacts are provided by residues Asp80 and 141–148 (TGNPYFTT). Residues Thr168, Tyr174, and Asp177 each contribute to the ATP site.

This sequence belongs to the UMP kinase family. As to quaternary structure, homohexamer.

The protein resides in the cytoplasm. The enzyme catalyses UMP + ATP = UDP + ADP. The protein operates within pyrimidine metabolism; CTP biosynthesis via de novo pathway; UDP from UMP (UMPK route): step 1/1. Allosterically activated by GTP. Inhibited by UTP. In terms of biological role, catalyzes the reversible phosphorylation of UMP to UDP. The polypeptide is Uridylate kinase (Paracoccus denitrificans (strain Pd 1222)).